We begin with the raw amino-acid sequence, 521 residues long: MFS siderochrome iron transporter 1 (521 aa).

Polar residues predominate over residues 1–10 (MDKTASLTSQ). A disordered region spans residues 1–29 (MDKTASLTSQDAEKHDPDALRKERATDPP). The segment covering 11–29 (DAEKHDPDALRKERATDPP) has biased composition (basic and acidic residues). A run of 5 helical transmembrane segments spans residues 62–82 (WGLF…PLMG), 99–119 (FLSL…AFGC), 126–146 (WSFN…GGTQ), 148–168 (FVAL…NMPV), and 187–207 (ILSI…WPLI). Residue Asn209 is glycosylated (N-linked (GlcNAc...) asparagine). The next 6 helical transmembrane spans lie at 229–249 (YLLF…FFVF), 330–350 (LAWS…ASTL), 379–399 (VIIA…VEQP), 404–424 (KGTL…TTTA), 431–451 (LGWN…LYAI), and 466–486 (GLTA…ALYA). N-linked (GlcNAc...) asparagine glycosylation is present at Asn487. The helical transmembrane segment at 491–511 (AVPVYVSGALIIASGAMALLL) threads the bilayer.

It belongs to the major facilitator superfamily.

The protein resides in the membrane. Functionally, major facilitator transporter probably involved in siderophore basidioferrin transmembrane transport. The polypeptide is MFS siderochrome iron transporter 1 (Ceriporiopsis subvermispora (strain B) (White-rot fungus)).